A 363-amino-acid polypeptide reads, in one-letter code: Small ribosomal subunit biogenesis GTPase RsgA (363 aa).

A CP-type G domain is found at 112–268 (HQQVIAANID…LIDTPGMREL (157 aa)). GTP is bound by residues 157 to 160 (TKAD) and 210 to 218 (GSSGAGKST). Cysteine 291, cysteine 296, histidine 298, and cysteine 304 together coordinate Zn(2+). Residues 340-363 (RVAQNNRGKGSGKRPASVDRPGRR) form a disordered region.

This sequence belongs to the TRAFAC class YlqF/YawG GTPase family. RsgA subfamily. In terms of assembly, monomer. Associates with 30S ribosomal subunit, binds 16S rRNA. Zn(2+) is required as a cofactor.

Its subcellular location is the cytoplasm. Functionally, one of several proteins that assist in the late maturation steps of the functional core of the 30S ribosomal subunit. Helps release RbfA from mature subunits. May play a role in the assembly of ribosomal proteins into the subunit. Circularly permuted GTPase that catalyzes slow GTP hydrolysis, GTPase activity is stimulated by the 30S ribosomal subunit. The chain is Small ribosomal subunit biogenesis GTPase RsgA from Xanthomonas euvesicatoria pv. vesicatoria (strain 85-10) (Xanthomonas campestris pv. vesicatoria).